We begin with the raw amino-acid sequence, 58 residues long: DNA-directed RNA polymerases I, II, and III subunit RPABC4 (58 aa).

Residues Cys-19, Cys-22, Cys-36, and Cys-39 each coordinate Zn(2+). The C4-type zinc finger occupies 19 to 39 (CGECHTENEIKSRDPIRCREC).

It belongs to the archaeal Rpo12/eukaryotic RPC10 RNA polymerase subunit family. Component of the RNA polymerase I (Pol I), RNA polymerase II (Pol II) and RNA polymerase III (Pol III) complexes consisting of at least 13, 12 and 17 subunits, respectively. Pol I complex consists of a ten-subunit catalytic core composed of POLR1A/RPA1, POLR1B/RPA2, POLR1C/RPAC1, POLR1D/RPAC2, POLR1H/RPA12, POLR2E/RPABC1, POLR2F/RPABC2, POLR2H/RPABC3, POLR2K/RPABC4 and POLR2L/RPABC5; a mobile stalk subunit POLR1F/RPA43 protruding from the core and additional subunits homologous to general transcription factors POLR1E/RPA49 and POLR1G/RPA34. Part of Pol I pre-initiation complex (PIC), in which Pol I core assembles with RRN3 and promoter-bound UTBF and SL1/TIF-IB complex. Pol II complex contains a ten-subunit catalytic core composed of POLR2A/RPB1, POLR2B/RPB2, POLR2C/RPB3, POLR2I/RPB9, POLR2J/RPB11, POLR2E/RPABC1, POLR2F/RPABC2, POLR2H/RPABC3, POLR2K/RPABC4 and POLR2L/RPABC5 and a mobile stalk composed of two subunits POLR2D/RPB4 and POLR2G/RPB7. Part of Pol II(G) complex, in which Pol II core associates with an additional subunit POLR2M; unlike conventional Pol II, Pol II(G) functions as a transcriptional repressor. Part of TBP-based Pol II pre-initiation complex (PIC), in which Pol II core assembles with general transcription factors and other specific initiation factors including GTF2E1, GTF2E2, GTF2F1, GTF2F2, TCEA1, ERCC2, ERCC3, GTF2H2, GTF2H3, GTF2H4, GTF2H5, GTF2A1, GTF2A2, GTF2B and TBP; this large multi-subunit PIC complex mediates DNA unwinding and targets Pol II core to the transcription start site where the first phosphodiester bond forms. Pol III complex consists of a ten-subunit catalytic core composed of POLR3A/RPC1, POLR3B/RPC2, POLR1C/RPAC1, POLR1D/RPAC2, POLR3K/RPC10, POLR2E/RPABC1, POLR2F/RPABC2, POLR2H/RPABC3, POLR2K/RPABC4 and POLR2L/RPABC5; a mobile stalk composed of two subunits POLR3H/RPC8 and CRCP/RPC9, protruding from the core and functioning primarily in transcription initiation; and additional subunits homologous to general transcription factors of the RNA polymerase II machinery, POLR3C/RPC3-POLR3F/RPC6-POLR3G/RPC7 heterotrimer required for transcription initiation and POLR3D/RPC4-POLR3E/RPC5 heterodimer involved in both transcription initiation and termination.

It localises to the nucleus. Its subcellular location is the nucleolus. DNA-dependent RNA polymerase catalyzes the transcription of DNA into RNA using the four ribonucleoside triphosphates as substrates. Common component of RNA polymerases I, II and III which synthesize ribosomal RNA precursors, mRNA precursors and many functional non-coding RNAs, and a small RNAs, such as 5S rRNA and tRNAs, respectively. In Bos taurus (Bovine), this protein is DNA-directed RNA polymerases I, II, and III subunit RPABC4 (POLR2K).